A 449-amino-acid chain; its full sequence is SWI/SNF chromatin-remodeling accessory subunit 2 (449 aa).

The span at 1-11 shows a compositional bias: polar residues; that stretch reads MHSQQRPNPQM. A disordered region spans residues 1-56; sequence MHSQQRPNPQMNRHPYGTPGSAPQMRRPGGFAGQPPQMHGPRMVAPPAAPLPKKKK. In terms of domain architecture, SWIB/MDM2 spans 223-300; that stretch reads NHPAKFKLHP…PNKLHQLLQQ (78 aa).

This sequence belongs to the SMARCD family. Component of the multiprotein chromatin-remodeling complexes SWI/SNF: SWI/SNF-A (BAF), SWI/SNF-B (PBAF) and related complexes. The canonical complex contains a catalytic subunit swsn-4, core subunits swsn-1 and swsn-5, and accessory subunits swsn-3, swsn-6, phf-10, dpff-1, swsn-9 and either ham-3/swsn-2.1 or swsn-2.2.

It localises to the nucleus. The protein resides in the nucleoplasm. The protein localises to the chromosome. It is found in the nucleus envelope. Involved in transcriptional activation and repression of select genes by chromatin remodeling (alteration of DNA-nucleosome topology). Component of SWI/SNF chromatin remodeling complexes that carry out key enzymatic activities, changing chromatin structure by altering DNA-histone contacts within a nucleosome in an ATP-dependent manner. Probably regulates vulva development through the let-60/Ras pathway. Involved in nuclear reassembly after mitosis and recruitment of nuclear envelope protein, mel-28, to the nuclear periphery in the early embryo and in the adult germline. Involved in gonadogenesis. The protein is SWI/SNF chromatin-remodeling accessory subunit 2 of Caenorhabditis elegans.